Reading from the N-terminus, the 193-residue chain is Putative manganese efflux pump MntP (193 aa).

6 helical membrane passes run 3–23 (MYAT…ASIC), 41–61 (LIFG…GLYA), 65–85 (IIEW…CRMI), 106–126 (IVLI…GIGL), 133–153 (IVHT…LGML), and 169–189 (IGGL…LELF).

The protein belongs to the MntP (TC 9.B.29) family.

It localises to the cell inner membrane. Functionally, probably functions as a manganese efflux pump. This chain is Putative manganese efflux pump MntP, found in Photorhabdus laumondii subsp. laumondii (strain DSM 15139 / CIP 105565 / TT01) (Photorhabdus luminescens subsp. laumondii).